The sequence spans 737 residues: Propionyl-CoA carboxylase alpha chain, mitochondrial (737 aa).

The transit peptide at Met1–Ser61 directs the protein to the mitochondrion. Residues Thr71–Pro518 form the Biotin carboxylation domain. Residue Lys74 is modified to N6-acetyllysine; alternate. Residue Lys74 is modified to N6-succinyllysine; alternate. Lys128 carries the N6-succinyllysine modification. An N6-acetyllysine; alternate modification is found at Lys159. Lys159 is subject to N6-succinyllysine; alternate. An N6-acetyllysine modification is found at Lys163. Lys186 provides a ligand contact to ATP. The ATP-grasp domain maps to Lys190 to Lys387. Lys197 bears the N6-succinyllysine mark. An N6-acetyllysine; alternate modification is found at Lys209. Lys209 is subject to N6-succinyllysine; alternate. Residues Ala218–Ile279, Glu270, and Asn305 contribute to the ATP site. A Phosphoserine modification is found at Ser261. Position 271 is an N6-succinyllysine (Lys271). Residue Lys337 is modified to N6-acetyllysine; alternate. At Lys337 the chain carries N6-succinyllysine; alternate. Glu345, Glu358, and Asn360 together coordinate Mg(2+). Residues Glu345, Glu358, and Asn360 each contribute to the Mn(2+) site. Residue Arg362 is part of the active site. 2 positions are modified to N6-succinyllysine: Lys394 and Lys416. Phe418 is a biotin binding site. Position 505 is an N6-acetyllysine (Lys505). Lys511, Lys522, Lys567, and Lys657 each carry N6-succinyllysine. The region spanning Phe658–Glu737 is the Biotinyl-binding domain. Lys703 carries the post-translational modification N6-biotinyllysine; by HLCS.

As to quaternary structure, the holoenzyme is a dodecamer composed of 6 PCCA/alpha subunits and 6 PCCB/beta subunits. Interacts (via the biotin carboxylation domain) with SIRT4. Interacts with SIRT3 and SIRT5. The cofactor is biotin. Mg(2+) is required as a cofactor. Mn(2+) serves as cofactor. Post-translationally, acetylated. In terms of processing, the biotin cofactor is covalently attached to the C-terminal biotinyl-binding domain and is required for the catalytic activity. Biotinylation is catalyzed by HLCS.

The protein localises to the mitochondrion matrix. It carries out the reaction propanoyl-CoA + hydrogencarbonate + ATP = (S)-methylmalonyl-CoA + ADP + phosphate + H(+). The enzyme catalyses butanoyl-CoA + hydrogencarbonate + ATP = (2S)-ethylmalonyl-CoA + ADP + phosphate + H(+). The protein operates within metabolic intermediate metabolism; propanoyl-CoA degradation; succinyl-CoA from propanoyl-CoA: step 1/3. This is one of the 2 subunits of the biotin-dependent propionyl-CoA carboxylase (PCC), a mitochondrial enzyme involved in the catabolism of odd chain fatty acids, branched-chain amino acids isoleucine, threonine, methionine, and valine and other metabolites. Propionyl-CoA carboxylase catalyzes the carboxylation of propionyl-CoA/propanoyl-CoA to D-methylmalonyl-CoA/(S)-methylmalonyl-CoA. Within the holoenzyme, the alpha subunit catalyzes the ATP-dependent carboxylation of the biotin carried by the biotin carboxyl carrier (BCC) domain, while the beta subunit then transfers the carboxyl group from carboxylated biotin to propionyl-CoA. Propionyl-CoA carboxylase also significantly acts on butyryl-CoA/butanoyl-CoA, which is converted to ethylmalonyl-CoA/(2S)-ethylmalonyl-CoA. Other alternative minor substrates include (2E)-butenoyl-CoA/crotonoyl-CoA. This Rattus norvegicus (Rat) protein is Propionyl-CoA carboxylase alpha chain, mitochondrial.